Consider the following 108-residue polypeptide: Complement inhibitor CirpT4 (108 aa).

An N-terminal signal peptide occupies residues 1–19 (MRAFVALFCTLVAFATVIC). Cystine bridges form between Cys-40/Cys-64, Cys-59/Cys-98, Cys-76/Cys-99, and Cys-85/Cys-104.

This sequence belongs to the CirpT family. Expressed in salivary glands.

The protein resides in the secreted. In terms of biological role, complement inhibitor. Prevents complement-mediated activation of C5 by sterically preventing direct binding of C5 to its convertase (binding with domains MG4 and MG5). Binds C5 at a different binding site than the other tick complement inhibitors OmCI and RaCI3, and the drug eculizumab. Inhibits the complement in human, rat and guinea pig, and also shows a reduced inhibition in rabbit and pig. This Amblyomma americanum (Lone star tick) protein is Complement inhibitor CirpT4.